The primary structure comprises 165 residues: Cytochrome c-type biogenesis protein CcmE (165 aa).

The Cytoplasmic segment spans residues 1–29 (MSATAEDNARGAKPAGNFARTVSQRKRKR). The chain crosses the membrane as a helical; Signal-anchor for type II membrane protein span at residues 30–50 (LFLIGGALAVLAVAVGLMLMA). Residues 51-165 (FSQDIRFFRT…LKEKGVWEGK (115 aa)) lie on the Periplasmic side of the membrane. Residues His-143 and Tyr-147 each contribute to the heme site.

The protein belongs to the CcmE/CycJ family.

It is found in the cell inner membrane. Its function is as follows. Heme chaperone required for the biogenesis of c-type cytochromes. Transiently binds heme delivered by CcmC and transfers the heme to apo-cytochromes in a process facilitated by CcmF and CcmH. The protein is Cytochrome c-type biogenesis protein CcmE of Brucella anthropi (strain ATCC 49188 / DSM 6882 / CCUG 24695 / JCM 21032 / LMG 3331 / NBRC 15819 / NCTC 12168 / Alc 37) (Ochrobactrum anthropi).